Reading from the N-terminus, the 451-residue chain is MGKKLFGTDGLRGRVNIYPMTPEVALRLGLAAGTYYRRKSHRSRVVIGKDTRISGYIFENALTAGLLASGMDVFLVGPLPTPAVSFLTANMRADFGVVISASHNPFYDNGIKLFDADGFKIPDKAEHKISEMILDQSHTWDYPDPSSVGRAHKIKDALGRYIVYLKNTFPSTLSLEGLRIVLDCANGANYKVAPLALEELGAELIKIGTDPNGLNINHQCGSLFPEYVAKKVIEMRADIGLALDGDADRLIVVDEKGIILNGDQIMALCAQDLMRQNKLPGNILVATVMSNMALEVFMKEKKGALIRSNVGDRYVMEAMRKHGAMFGGEQSGHLIFREYSNTGDGLLAALQILRIMKQYERPLSSLAGLLQLFPQRLINVNVKQKRPIETMPTLLKTIQRIETAFSGRGRVLLRYSGTEPLCRVMVEGESDSKVNTYAEELADIVAKSLAE.

The active-site Phosphoserine intermediate is the serine 102. Positions 102, 244, 246, and 248 each coordinate Mg(2+). Phosphoserine is present on serine 102.

It belongs to the phosphohexose mutase family. The cofactor is Mg(2+). Post-translationally, activated by phosphorylation.

The catalysed reaction is alpha-D-glucosamine 1-phosphate = D-glucosamine 6-phosphate. Functionally, catalyzes the conversion of glucosamine-6-phosphate to glucosamine-1-phosphate. This Lawsonia intracellularis (strain PHE/MN1-00) protein is Phosphoglucosamine mutase.